The chain runs to 472 residues: Alanine--anticapsin ligase (472 aa).

E109 contributes to the Mg(2+) binding site. Residues K138 and K178 each contribute to the ATP site. The ATP-grasp domain occupies 142 to 355 (RAAFNRAGVK…MAQLLLDVLC (214 aa)). L182 is a binding site for Mg(2+). Residues 184 to 185 (SS), 226 to 229 (EEFL), and Q268 contribute to the ATP site. Residues E273 and 309 to 311 (HTE) each bind substrate. Positions 311 and 324 each coordinate Mg(2+). 328-331 (RFAG) lines the substrate pocket.

In terms of assembly, monomer or homodimer. Mg(2+) is required as a cofactor.

The catalysed reaction is L-anticapsin + L-alanine + ATP = bacilysin + ADP + phosphate + H(+). It participates in antibiotic biosynthesis; bacilysin biosynthesis. In terms of biological role, part of the bacABCDEFG operon responsible for the biosynthesis of bacilysin, an irreversible inactivator of the glutaminase domain of glucosamine synthetase. Catalyzes the formation of alpha-dipeptides from various L-amino acids in the presence of ATP. In vivo catalyzes the ligation of L-alanine and L-anticapsin (epoxycyclohexanonyl-Ala) to produce the final bacilysin antibiotic (L-Ala-L-4S-cyclohexenonyl-Ala dipeptide). The polypeptide is Alanine--anticapsin ligase (Bacillus amyloliquefaciens (Bacillus velezensis)).